Consider the following 426-residue polypeptide: Glutamate-1-semialdehyde 2,1-aminomutase (426 aa).

Lys265 carries the N6-(pyridoxal phosphate)lysine modification.

The protein belongs to the class-III pyridoxal-phosphate-dependent aminotransferase family. HemL subfamily. Homodimer. It depends on pyridoxal 5'-phosphate as a cofactor.

Its subcellular location is the cytoplasm. It carries out the reaction (S)-4-amino-5-oxopentanoate = 5-aminolevulinate. It functions in the pathway porphyrin-containing compound metabolism; protoporphyrin-IX biosynthesis; 5-aminolevulinate from L-glutamyl-tRNA(Glu): step 2/2. The chain is Glutamate-1-semialdehyde 2,1-aminomutase from Cronobacter sakazakii (strain ATCC BAA-894) (Enterobacter sakazakii).